A 459-amino-acid chain; its full sequence is Bifunctional protein GlmU (459 aa).

The tract at residues 1–229 is pyrophosphorylase; that stretch reads MLTQEIIIVI…YEEILGINNK (229 aa). UDP-N-acetyl-alpha-D-glucosamine contacts are provided by residues 11–14, K25, Q76, 81–82, 103–105, G140, E154, and N227; these read LAAG, GT, and YGD. D105 contacts Mg(2+). Position 227 (N227) interacts with Mg(2+). The interval 230–250 is linker; it reads LQLSNLEKIFQKKQINKLLIN. An N-acetyltransferase region spans residues 251–459; it reads GVTIKDPSHF…MRSKKIIKKN (209 aa). Residues R333 and K351 each contribute to the UDP-N-acetyl-alpha-D-glucosamine site. The active-site Proton acceptor is H363. Positions 366 and 377 each coordinate UDP-N-acetyl-alpha-D-glucosamine. Acetyl-CoA contacts are provided by residues A380, 386-387, S405, and A423; that span reads NY.

This sequence in the N-terminal section; belongs to the N-acetylglucosamine-1-phosphate uridyltransferase family. In the C-terminal section; belongs to the transferase hexapeptide repeat family. As to quaternary structure, homotrimer. Mg(2+) serves as cofactor.

It localises to the cytoplasm. The enzyme catalyses alpha-D-glucosamine 1-phosphate + acetyl-CoA = N-acetyl-alpha-D-glucosamine 1-phosphate + CoA + H(+). It carries out the reaction N-acetyl-alpha-D-glucosamine 1-phosphate + UTP + H(+) = UDP-N-acetyl-alpha-D-glucosamine + diphosphate. Its pathway is nucleotide-sugar biosynthesis; UDP-N-acetyl-alpha-D-glucosamine biosynthesis; N-acetyl-alpha-D-glucosamine 1-phosphate from alpha-D-glucosamine 6-phosphate (route II): step 2/2. It participates in nucleotide-sugar biosynthesis; UDP-N-acetyl-alpha-D-glucosamine biosynthesis; UDP-N-acetyl-alpha-D-glucosamine from N-acetyl-alpha-D-glucosamine 1-phosphate: step 1/1. The protein operates within bacterial outer membrane biogenesis; LPS lipid A biosynthesis. Functionally, catalyzes the last two sequential reactions in the de novo biosynthetic pathway for UDP-N-acetylglucosamine (UDP-GlcNAc). The C-terminal domain catalyzes the transfer of acetyl group from acetyl coenzyme A to glucosamine-1-phosphate (GlcN-1-P) to produce N-acetylglucosamine-1-phosphate (GlcNAc-1-P), which is converted into UDP-GlcNAc by the transfer of uridine 5-monophosphate (from uridine 5-triphosphate), a reaction catalyzed by the N-terminal domain. The protein is Bifunctional protein GlmU of Buchnera aphidicola subsp. Acyrthosiphon pisum (strain 5A).